The following is a 447-amino-acid chain: MLLCVSANHKKTSFTVLEQLARVSPDFASELVEAEDIDGAAILSTCNRFEVYIDAIQKGDQDDVCKTGLLVQNRIGELCNISPSTIIEQTSFLAGCEVSRHLFSVATGLESMIIGETEIAGQVKRALTYAQKCRTTSPELERLFQRASAVNRHIRQSTKINEVGQSLVSLSLDLASSRIGDWSGVRAIIVGTGKYASKALALLKERGVVDISVYSPSGHVNNICNTEGVRNIFNLQTALSGCDLVVGCSSVDKPVITKQDIETAQASGSRTSRVRPVGRPSTDLTAIEASNRSRHVLIDLGLPRNFDPAISDLPTADLIDLDMLRVHAPFDNLAAEKMAHELAIESSSQFVNDCKQHEATPVIVSFRNYLESLTQTSLRRTDNCKHAQHALKHFVNSLIHIPLTRCKQLAANGESHKFAESMEILFDVKTDCTEGTQYQSSCGKSFD.

Substrate is bound by residues 45–48 (TCNR), S111, 116–118 (ETE), and Q122. Residue C46 is the Nucleophile of the active site. 191–196 (GTGKYA) contacts NADP(+).

Belongs to the glutamyl-tRNA reductase family. In terms of assembly, homodimer.

The enzyme catalyses (S)-4-amino-5-oxopentanoate + tRNA(Glu) + NADP(+) = L-glutamyl-tRNA(Glu) + NADPH + H(+). Its pathway is porphyrin-containing compound metabolism; protoporphyrin-IX biosynthesis; 5-aminolevulinate from L-glutamyl-tRNA(Glu): step 1/2. Functionally, catalyzes the NADPH-dependent reduction of glutamyl-tRNA(Glu) to glutamate 1-semialdehyde (GSA). This Tropheryma whipplei (strain Twist) (Whipple's bacillus) protein is Glutamyl-tRNA reductase.